A 373-amino-acid polypeptide reads, in one-letter code: MTRSILQSARRIIVKVGSSLVTNEGSGLDRQVLGGWAGQISRLKKMGKEVVLVSSGAVAEGMQRLGWKTRPAALYELQAAAAVGQMDLAQAYADCFSEYKLLTAQILLTHDDLSSRKRYLNARSTILTLLNLDIVPIINENDTVVSDEIRFGDNDNLAALVANLIEAEVLVILTDQEGLFTGDPRKHADATLISEISVSDPHIETMAGGTSSGIGRGGMQSKVMAARRAARSGAHTVIASGRVENVLVRLANGEAIGTSLLADMPVKVARKLWLADHLQVRGSVVLDDGASRALLSGGKSLLPIGVVEVRGNFERGEAISCLNTSGREIARGLANYSARESHKIMRRPSSQIEAVLGYVGEYELVHRDNLVIL.

Lys15 contributes to the ATP binding site. Substrate contacts are provided by Ser55, Asp142, and Asn154. 174–175 (TD) serves as a coordination point for ATP. The 79-residue stretch at 281–359 (RGSVVLDDGA…SQIEAVLGYV (79 aa)) folds into the PUA domain.

It belongs to the glutamate 5-kinase family.

Its subcellular location is the cytoplasm. It catalyses the reaction L-glutamate + ATP = L-glutamyl 5-phosphate + ADP. Its pathway is amino-acid biosynthesis; L-proline biosynthesis; L-glutamate 5-semialdehyde from L-glutamate: step 1/2. Catalyzes the transfer of a phosphate group to glutamate to form L-glutamate 5-phosphate. The protein is Glutamate 5-kinase of Nitrosomonas eutropha (strain DSM 101675 / C91 / Nm57).